The sequence spans 276 residues: Apulose-4-phosphate transketolase subunit A (276 aa).

It belongs to the transketolase family. Probable heterodimer composed of AptA and AptB. Thiamine diphosphate serves as cofactor.

It catalyses the reaction apulose 4-phosphate + D-glyceraldehyde 3-phosphate = D-xylulose 5-phosphate + dihydroxyacetone phosphate. It functions in the pathway carbohydrate metabolism. Involved in catabolism of D-apiose. Catalyzes the transfer of the glycolaldehyde group from apulose-4-phosphate to D-glyceraldehyde 3-phosphate, generating dihydroxyacetone phosphate and D-xylulose-5-phosphate. The sequence is that of Apulose-4-phosphate transketolase subunit A from Actinobacillus succinogenes (strain ATCC 55618 / DSM 22257 / CCUG 43843 / 130Z).